Consider the following 307-residue polypeptide: MAGRLAGFLMLLGLASQGPAPAYAGKMKVVEEPNTFGLNNPFLPQASRLQPKREPSAVSGPLHLFRLAGKCFSLVESTYKYEFCPFHNVTQHEQTFRWNAYSGILGIWHEWEIINNTFKGMWMTDGDSCHSRSRQSKVELTCGKINRLAHVSEPSTCVYALTFETPLVCHPHSLLVYPTLSEALQQRWDQVEQDLADELITPQGYEKLLRVLFEDAGYLKVPGETHPTQLAGGSKGLGLETLDNCRKAHAELSQEVQRLTSLLQQHGIPHTQPTETTHSQHLGQQLPIGAIAAEHLRSDPGLRGNIL.

A signal peptide spans 1-24; it reads MAGRLAGFLMLLGLASQGPAPAYA. Residues 69–171 enclose the MRH domain; sequence GKCFSLVEST…TFETPLVCHP (103 aa). An intrachain disulfide couples C71 to C84. 2 N-linked (GlcNAc...) asparagine glycosylation sites follow: N88 and N115. Disulfide bonds link C129-C157 and C142-C169. Residues 176 to 279 form the DMAP1-binding domain; the sequence is VYPTLSEALQ…HTQPTETTHS (104 aa).

In terms of assembly, homodimer; disulfide-linked. Hexamer of two alpha (GNPTAB), two beta (GNPTAB) and two gamma (GNPTG) subunits; disulfide-linked. The alpha and/or the beta subunits of the enzyme constitute the catalytic subunits. In terms of processing, cys-245 mediates the formation of the interchain disulfide bond for formation of the homodimer. Cys-142, Cys-157 and Cys-169 are involved in intramolecular disulfide bonds formation. Widely expressed. Highly expressed in the liver, intestine, brain, thymus, testis and ovary.

The protein localises to the secreted. It localises to the golgi apparatus. Non-catalytic subunit of the N-acetylglucosamine-1-phosphotransferase complex, an enzyme that catalyzes the formation of mannose 6-phosphate (M6P) markers on high mannose type oligosaccharides in the Golgi apparatus. Binds and presents the high mannose glycans of the acceptor to the catalytic alpha and beta subunits (GNPTAB). Enhances the rate of N-acetylglucosamine-1-phosphate transfer to the oligosaccharides of acid hydrolase acceptors. In Mus musculus (Mouse), this protein is N-acetylglucosamine-1-phosphotransferase subunit gamma (Gnptg).